Consider the following 464-residue polypeptide: Flavin-containing monooxygenase FMO GS-OX-like 7 (464 aa).

Residue 18-23 (GAGAAG) coordinates FAD. Position 214-219 (214-219 (GSSVSG)) interacts with NADP(+).

It belongs to the FMO family. It depends on FAD as a cofactor.

In terms of biological role, catalyzes the conversion of methylthioalkyl glucosinolates of any chain length into methylsulfinylalkyl glucosinolates. The polypeptide is Flavin-containing monooxygenase FMO GS-OX-like 7 (Arabidopsis thaliana (Mouse-ear cress)).